Reading from the N-terminus, the 235-residue chain is Large ribosomal subunit protein uL1 (235 aa).

It belongs to the universal ribosomal protein uL1 family. In terms of assembly, part of the 50S ribosomal subunit.

Its function is as follows. Binds directly to 23S rRNA. The L1 stalk is quite mobile in the ribosome, and is involved in E site tRNA release. Protein L1 is also a translational repressor protein, it controls the translation of the L11 operon by binding to its mRNA. This Halothermothrix orenii (strain H 168 / OCM 544 / DSM 9562) protein is Large ribosomal subunit protein uL1.